The chain runs to 370 residues: tRNA-specific 2-thiouridylase MnmA (370 aa).

ATP-binding positions include 9 to 16 and methionine 35; that span reads GLSGGVDS. The segment at 95-97 is interaction with target base in tRNA; the sequence is NPD. The Nucleophile role is filled by cysteine 100. A disulfide bridge connects residues cysteine 100 and cysteine 198. Glycine 124 is a binding site for ATP. An interaction with tRNA region spans residues 148–150; the sequence is KDQ. The active-site Cysteine persulfide intermediate is cysteine 198. The segment at 316–317 is interaction with tRNA; that stretch reads RY.

Belongs to the MnmA/TRMU family.

It is found in the cytoplasm. The enzyme catalyses S-sulfanyl-L-cysteinyl-[protein] + uridine(34) in tRNA + AH2 + ATP = 2-thiouridine(34) in tRNA + L-cysteinyl-[protein] + A + AMP + diphosphate + H(+). Catalyzes the 2-thiolation of uridine at the wobble position (U34) of tRNA, leading to the formation of s(2)U34. This chain is tRNA-specific 2-thiouridylase MnmA, found in Acidovorax ebreus (strain TPSY) (Diaphorobacter sp. (strain TPSY)).